A 474-amino-acid polypeptide reads, in one-letter code: PRAME family member 1 (474 aa).

The stretch at 97 to 124 is one LRR 1; degenerate repeat; sequence RWKLQVLDLRDVDENFWARWPGAWALSC. An LRR 2; degenerate repeat occupies 179–203; it reads HLCCSKLVNYLTPIKYLRKSLKIIY. The LRR 3; degenerate repeat unit spans residues 204-230; sequence LNSIQELEIRNMSWPRLIRKLRCYLKE. An LRR 4; degenerate repeat occupies 231 to 265; sequence MKNLRKLVFSRCHHYTSDNELEGRLVAKFSSVFLR. 5 LRR repeats span residues 266 to 291, 292 to 323, 324 to 342, 348 to 375, and 376 to 400; these read LEHL…IRCL, QNPL…GYLK, HLNL…PLGA, AASL…GLSR, and CSQL…LLRH.

This sequence belongs to the PRAME family.

In Homo sapiens (Human), this protein is PRAME family member 1.